A 578-amino-acid polypeptide reads, in one-letter code: Potassium-transporting ATPase potassium-binding subunit (578 aa).

The next 11 helical transmembrane spans lie at 3 to 23 (AAAL…AVPL), 67 to 87 (AAAA…LERL), 95 to 115 (PAGL…SFAT), 136 to 156 (ALTV…AALV), 181 to 201 (LLLP…VPQT), 264 to 284 (LEAL…GALV), 291 to 311 (WTVY…TVSA), 396 to 416 (GLYG…LMVG), 436 to 456 (LAIL…CLLP), 504 to 524 (VAML…AGAF), and 543 to 563 (LFAG…FLPA).

Belongs to the KdpA family. In terms of assembly, the system is composed of three essential subunits: KdpA, KdpB and KdpC.

Its subcellular location is the cell inner membrane. In terms of biological role, part of the high-affinity ATP-driven potassium transport (or Kdp) system, which catalyzes the hydrolysis of ATP coupled with the electrogenic transport of potassium into the cytoplasm. This subunit binds the periplasmic potassium ions and delivers the ions to the membrane domain of KdpB through an intramembrane tunnel. The protein is Potassium-transporting ATPase potassium-binding subunit of Anaeromyxobacter dehalogenans (strain 2CP-C).